A 786-amino-acid polypeptide reads, in one-letter code: Endonuclease MutS2 (786 aa).

335–342 (GPNTGGKT) is an ATP binding site. One can recognise a Smr domain in the interval 711–786 (LDLRGERFEN…GLGVTVVELK (76 aa)).

Belongs to the DNA mismatch repair MutS family. MutS2 subfamily. In terms of assembly, homodimer. Binds to stalled ribosomes, contacting rRNA.

Functionally, endonuclease that is involved in the suppression of homologous recombination and thus may have a key role in the control of bacterial genetic diversity. Its function is as follows. Acts as a ribosome collision sensor, splitting the ribosome into its 2 subunits. Detects stalled/collided 70S ribosomes which it binds and splits by an ATP-hydrolysis driven conformational change. Acts upstream of the ribosome quality control system (RQC), a ribosome-associated complex that mediates the extraction of incompletely synthesized nascent chains from stalled ribosomes and their subsequent degradation. Probably generates substrates for RQC. This chain is Endonuclease MutS2, found in Bacillus cereus (strain ATCC 10987 / NRS 248).